Reading from the N-terminus, the 178-residue chain is Ribosome maturation factor RimP (178 aa).

It belongs to the RimP family.

It localises to the cytoplasm. Required for maturation of 30S ribosomal subunits. In Streptococcus pyogenes serotype M4 (strain MGAS10750), this protein is Ribosome maturation factor RimP.